A 299-amino-acid chain; its full sequence is Bifunctional phosphoglucose/phosphomannose isomerase (299 aa).

The 151-residue stretch at 27–177 (DEVEITPSSR…IHKLMEDFQK (151 aa)) folds into the SIS domain. Residues Gly44, Ser45, Ser84, Ser86, Thr89, and Arg132 each contribute to the D-fructose 6-phosphate site. Glu200 (proton acceptor) is an active-site residue. D-fructose 6-phosphate contacts are provided by His216 and Lys295. The active-site Proton donor is His216. The active-site Proton acceptor is Lys295.

The protein belongs to the PGI/PMI family. As to quaternary structure, homodimer.

It catalyses the reaction alpha-D-glucose 6-phosphate = beta-D-fructose 6-phosphate. The enzyme catalyses D-mannose 6-phosphate = D-fructose 6-phosphate. With respect to regulation, presence or absence of metal ions or EDTA does not significantly affect the phosphoglucose isomerase activity. Functionally, dual specificity isomerase that catalyzes the isomerization of both glucose-6-phosphate and mannose-6-phosphate to fructose-6-phosphate with nearly similar catalytic efficiency. Also catalyzes the epimerization of mannose 6-phosphate to glucose 6-phosphate but the rate of epimerization reaction is 20-fold lower than that of isomerization reaction. In Pyrobaculum calidifontis (strain DSM 21063 / JCM 11548 / VA1), this protein is Bifunctional phosphoglucose/phosphomannose isomerase.